Consider the following 166-residue polypeptide: Regulatory protein RecX (166 aa).

This sequence belongs to the RecX family.

It is found in the cytoplasm. Modulates RecA activity. This Shigella dysenteriae serotype 1 (strain Sd197) protein is Regulatory protein RecX.